The primary structure comprises 202 residues: D-alanyl-D-alanine dipeptidase (202 aa).

The Zn(2+) site is built by His116 and Asp123. The active-site Proton donor/acceptor is the Glu181. His184 contacts Zn(2+).

It belongs to the peptidase M15D family. Homodimer. The cofactor is Zn(2+). Fe(2+) serves as cofactor. It depends on Co(2+) as a cofactor. Ni(2+) is required as a cofactor.

It catalyses the reaction D-alanyl-D-alanine + H2O = 2 D-alanine. Inhibited by aminoalkyl phosphinate analogs. Functionally, catalyzes hydrolysis of the D-alanyl-D-alanine dipeptide. The sequence is that of D-alanyl-D-alanine dipeptidase (vanX) from Enterococcus faecium (Streptococcus faecium).